A 109-amino-acid polypeptide reads, in one-letter code: Small ribosomal subunit protein bS6 (109 aa).

This sequence belongs to the bacterial ribosomal protein bS6 family.

Its function is as follows. Binds together with bS18 to 16S ribosomal RNA. This is Small ribosomal subunit protein bS6 from Anaplasma marginale (strain St. Maries).